We begin with the raw amino-acid sequence, 184 residues long: Elongation factor P (184 aa).

This sequence belongs to the elongation factor P family.

The protein resides in the cytoplasm. It participates in protein biosynthesis; polypeptide chain elongation. Involved in peptide bond synthesis. Stimulates efficient translation and peptide-bond synthesis on native or reconstituted 70S ribosomes in vitro. Probably functions indirectly by altering the affinity of the ribosome for aminoacyl-tRNA, thus increasing their reactivity as acceptors for peptidyl transferase. The sequence is that of Elongation factor P from Paracidovorax citrulli (strain AAC00-1) (Acidovorax citrulli).